Consider the following 378-residue polypeptide: Histidinol-phosphate aminotransferase (378 aa).

The tract at residues 1–20 is disordered; sequence MSVSAKETQRHPARPEPRPG. Residues 7–17 show a composition bias toward basic and acidic residues; that stretch reads ETQRHPARPEP. Lys-232 is modified (N6-(pyridoxal phosphate)lysine).

The protein belongs to the class-II pyridoxal-phosphate-dependent aminotransferase family. Histidinol-phosphate aminotransferase subfamily. Homodimer. Pyridoxal 5'-phosphate serves as cofactor.

It catalyses the reaction L-histidinol phosphate + 2-oxoglutarate = 3-(imidazol-4-yl)-2-oxopropyl phosphate + L-glutamate. It participates in amino-acid biosynthesis; L-histidine biosynthesis; L-histidine from 5-phospho-alpha-D-ribose 1-diphosphate: step 7/9. This chain is Histidinol-phosphate aminotransferase, found in Azorhizobium caulinodans (strain ATCC 43989 / DSM 5975 / JCM 20966 / LMG 6465 / NBRC 14845 / NCIMB 13405 / ORS 571).